Here is a 184-residue protein sequence, read N- to C-terminus: Oligoribonuclease (184 aa).

The Exonuclease domain occupies 8–171; that stretch reads LIWIDLEMTG…EDIRESVVEL (164 aa). Y129 is an active-site residue.

Belongs to the oligoribonuclease family.

The protein resides in the cytoplasm. In terms of biological role, 3'-to-5' exoribonuclease specific for small oligoribonucleotides. This Buchnera aphidicola subsp. Acyrthosiphon pisum (strain APS) (Acyrthosiphon pisum symbiotic bacterium) protein is Oligoribonuclease.